A 795-amino-acid polypeptide reads, in one-letter code: Protein Jade-3 (795 aa).

The span at 1 to 25 (MKRLRTPSSSDSSDNESPSTSFSSN) shows a compositional bias: low complexity. A disordered region spans residues 1 to 41 (MKRLRTPSSSDSSDNESPSTSFSSNKYGSKPGTPASAQKKP). Residues 201 to 251 (DVICDVCRSPDSEEGNDMVFCDKCNICVHQACYGIVKVPDGNWLCRTCVLG) form a PHD-type 1 zinc finger. A C2HC pre-PHD-type zinc finger spans residues 253–287 (TPQCLLCPKTGGAMKATRAGTKWAHVSCALWIPEV). A PHD-type 2 zinc finger spans residues 311-367 (LICSLCKLKTGACIQCSVKNCTIPFHVTCAFEHSLEMKTILDEGDEVKFKSYCLKHS). Disordered stretches follow at residues 630–654 (HGQS…NGIL), 667–687 (AASE…SGFH), and 714–795 (FEKN…SVQR). Polar residues-rich tracts occupy residues 678-687 (SGKSQSSGFH) and 720-732 (KSSG…STER).

Belongs to the JADE family. As to quaternary structure, component of the HBO1 complex.

Scaffold subunit of some HBO1 complexes, which have a histone H4 acetyltransferase activity. The polypeptide is Protein Jade-3 (jade3) (Danio rerio (Zebrafish)).